We begin with the raw amino-acid sequence, 100 residues long: MIREERLLKVLKAPHISEKSTMVAEKQNTIVFKVAVDATKAEVKAAVAKLFEVEVETVRTLNMKGKTKRAGARVGRRSDWKKAYVTLKAGQDIDFMGAAE.

It belongs to the universal ribosomal protein uL23 family. In terms of assembly, part of the 50S ribosomal subunit. Contacts protein L29, and trigger factor when it is bound to the ribosome.

Functionally, one of the early assembly proteins it binds 23S rRNA. One of the proteins that surrounds the polypeptide exit tunnel on the outside of the ribosome. Forms the main docking site for trigger factor binding to the ribosome. This Aeromonas hydrophila subsp. hydrophila (strain ATCC 7966 / DSM 30187 / BCRC 13018 / CCUG 14551 / JCM 1027 / KCTC 2358 / NCIMB 9240 / NCTC 8049) protein is Large ribosomal subunit protein uL23.